Consider the following 240-residue polypeptide: MCSLEKRDRLFILKLTGDGEHRLNPTLLDSLRSTINQIRSDPSFSQSVLITTSDGKFFSNGYDLALAESNPSLSVVMDAKLRSLVADLISLPMPTIAAVTGHASAAGCILAMSHDYVLMRRDRGFLYMSELDIELIVPAWFMAVIRGKIGSPAARRDVMLTAAKVTADVGVKMGIVDSAYGSAAETVEAAIKLGEEIVQRGGDGHVYGKMRESLLREVLIHTIGEYESGSSVVRSTGSKL.

The Microbody targeting signal signature appears at 238 to 240; that stretch reads SKL.

The protein belongs to the enoyl-CoA hydratase/isomerase family.

It localises to the peroxisome. The enzyme catalyses a (3Z)-enoyl-CoA = a 4-saturated (2E)-enoyl-CoA. The catalysed reaction is a (3E)-enoyl-CoA = a 4-saturated (2E)-enoyl-CoA. It functions in the pathway lipid metabolism; fatty acid beta-oxidation. Its function is as follows. Able to isomerize both 3-cis and 3-trans double bonds into the 2-trans form in a range of enoyl-CoA species. Essential for the beta oxidation of unsaturated fatty acids. This Arabidopsis thaliana (Mouse-ear cress) protein is Enoyl-CoA delta isomerase 1, peroxisomal.